Consider the following 480-residue polypeptide: NADH-quinone oxidoreductase subunit N 1 (480 aa).

Helical transmembrane passes span 12 to 32 (LSMPELILAVGAMALLMIGVF), 38 to 58 (TPTVTGLAVAVLIIAGLWLVL), 78 to 98 (FMKVLALIGSITVMVMTVGHA), 106 to 126 (FEFPVLLVLATLGMLLMISAN), 128 to 148 (LISLYLSLELQSLALYVVAAI), 163 to 183 (FVLGALSSGMMLYGMSLVYGF), 203 to 223 (LGLVFGLVFILAGLAFKISAV), 241 to 261 (TAFFAAGPKVAAISILVRIVI), 271 to 291 (WQQIIVFISIASMLLGSFAAI), 303 to 323 (SSIGHMGYALVGLAAGSMAGV), 326 to 346 (VILYMLIYMVMTLGTFACILA), 372 to 392 (ATVLTILMFSLAGIPPLAGFF), 396 to 416 (FVFVAAIEAQLYGLAIIGVLA), and 449 to 469 (LVFGLSGLFVLGYVLIGGPLG).

The protein belongs to the complex I subunit 2 family. As to quaternary structure, NDH-1 is composed of 14 different subunits. Subunits NuoA, H, J, K, L, M, N constitute the membrane sector of the complex.

It is found in the cell inner membrane. It carries out the reaction a quinone + NADH + 5 H(+)(in) = a quinol + NAD(+) + 4 H(+)(out). Its function is as follows. NDH-1 shuttles electrons from NADH, via FMN and iron-sulfur (Fe-S) centers, to quinones in the respiratory chain. The immediate electron acceptor for the enzyme in this species is believed to be ubiquinone. Couples the redox reaction to proton translocation (for every two electrons transferred, four hydrogen ions are translocated across the cytoplasmic membrane), and thus conserves the redox energy in a proton gradient. The chain is NADH-quinone oxidoreductase subunit N 1 from Rhizobium meliloti (strain 1021) (Ensifer meliloti).